The chain runs to 337 residues: Glyceraldehyde-3-phosphate dehydrogenase (337 aa).

NAD(+) is bound by residues 12 to 13 (RI), Asp-34, and Arg-79. Residues 150–152 (SCT), Thr-181, 210–211 (TG), and Arg-233 each bind D-glyceraldehyde 3-phosphate. Cys-151 (nucleophile) is an active-site residue. Asn-315 serves as a coordination point for NAD(+).

It belongs to the glyceraldehyde-3-phosphate dehydrogenase family. In terms of assembly, homotetramer.

It localises to the cytoplasm. It catalyses the reaction D-glyceraldehyde 3-phosphate + phosphate + NAD(+) = (2R)-3-phospho-glyceroyl phosphate + NADH + H(+). The protein operates within carbohydrate degradation; glycolysis; pyruvate from D-glyceraldehyde 3-phosphate: step 1/5. The sequence is that of Glyceraldehyde-3-phosphate dehydrogenase (GPD) from Podospora anserina (Pleurage anserina).